We begin with the raw amino-acid sequence, 137 residues long: SPbeta prophage-derived uncharacterized protein YoqU (137 aa).

In Bacillus subtilis (strain 168), this protein is SPbeta prophage-derived uncharacterized protein YoqU (yoqU).